Here is a 288-residue protein sequence, read N- to C-terminus: ATP synthase gamma chain (288 aa).

Belongs to the ATPase gamma chain family. As to quaternary structure, F-type ATPases have 2 components, CF(1) - the catalytic core - and CF(0) - the membrane proton channel. CF(1) has five subunits: alpha(3), beta(3), gamma(1), delta(1), epsilon(1). CF(0) has three main subunits: a, b and c.

The protein resides in the cell membrane. Its function is as follows. Produces ATP from ADP in the presence of a proton gradient across the membrane. The gamma chain is believed to be important in regulating ATPase activity and the flow of protons through the CF(0) complex. The sequence is that of ATP synthase gamma chain from Staphylococcus haemolyticus (strain JCSC1435).